The following is a 448-amino-acid chain: FAD-dependent monooxygenase srdH (448 aa).

FAD contacts are provided by E32 and R107. The active site involves Q227. Residue D313 participates in FAD binding.

Belongs to the paxM FAD-dependent monooxygenase family. The cofactor is FAD.

Its function is as follows. Highly reducing polyketide synthase; part of the gene cluster that mediates the biosynthesis of sordarial, a salicylic aldehyde structurally related to the phytotoxin pyriculol. The most interesting aspect of this pathway is formation of an aromatic product from the highly reducing polyketide synthase srdA. SrdA synthesizes a reduced polyketide chain from one molecule of acetyl-CoA and five molecules of malonyl-CoA. The polyketide chain is then reductively released as an aldehyde. The oxidoreductases srdC, srdD and srdE then oxidize one of the hydroxy groups to facilitate the intramolecular aldol condensation, followed by dehydration to yield a salicylic aldehyde. This aldehyde can undergo facile reduction by endogenous reductases to yield the alcohol 1-hydroxy-2-hydroxymethyl-3-pent-1,3-dienylbenzene. The flavin-dependent srdI counteract against the propensity of the aldehydes to be reduced under physiological conditions and is responsible for reoxidizing 1-hydroxy-2-hydroxymethyl-3-pent-1,3-dienylbenzene back to the salicylic aldehyde. This salicylic aldehyde is then selectively epoxidized by the cupin-domain-containing oxidoreductase srdB to yield the epoxide, which can be hydrolyzed stereoselectively by the hydrolase srdG to give the final product sordarial. This Neurospora crassa (strain ATCC 24698 / 74-OR23-1A / CBS 708.71 / DSM 1257 / FGSC 987) protein is FAD-dependent monooxygenase srdH.